The primary structure comprises 596 residues: Succinate dehydrogenase flavoprotein subunit (596 aa).

FAD-binding positions include 18–23 (GAGGAG), 41–56 (TKLF…AQGG), and aspartate 225. Tele-8alpha-FAD histidine is present on histidine 49. Residues histidine 246 and threonine 258 each contribute to the substrate site. Arginine 290 acts as the Proton acceptor in catalysis. Position 357 (histidine 357) interacts with substrate. An FAD-binding site is contributed by glutamate 391. Arginine 402 is a substrate binding site. FAD is bound at residue 407–408 (SL).

This sequence belongs to the FAD-dependent oxidoreductase 2 family. FRD/SDH subfamily. As to quaternary structure, part of an enzyme complex containing four subunits: a flavoprotein, an iron-sulfur, cytochrome b-556, and a hydrophobic anchor protein. It depends on FAD as a cofactor.

The protein localises to the cell inner membrane. It carries out the reaction a quinone + succinate = fumarate + a quinol. It participates in carbohydrate metabolism; tricarboxylic acid cycle; fumarate from succinate (bacterial route): step 1/1. In Rickettsia conorii (strain ATCC VR-613 / Malish 7), this protein is Succinate dehydrogenase flavoprotein subunit (sdhA).